A 298-amino-acid polypeptide reads, in one-letter code: GTP cyclohydrolase FolE2 (298 aa).

The protein belongs to the GTP cyclohydrolase IV family.

It catalyses the reaction GTP + H2O = 7,8-dihydroneopterin 3'-triphosphate + formate + H(+). The protein operates within cofactor biosynthesis; 7,8-dihydroneopterin triphosphate biosynthesis; 7,8-dihydroneopterin triphosphate from GTP: step 1/1. Its function is as follows. Converts GTP to 7,8-dihydroneopterin triphosphate. The polypeptide is GTP cyclohydrolase FolE2 (Neisseria meningitidis serogroup C (strain 053442)).